The chain runs to 146 residues: Hemoglobin subunit beta (146 aa).

One can recognise a Globin domain in the interval 2-146 (HWSAEEKQLI…VAHALARKYH (145 aa)). Residues H63 and H92 each contribute to the heme b site.

This sequence belongs to the globin family. As to quaternary structure, heterotetramer of two alpha chains and two beta chains. In terms of tissue distribution, red blood cells.

Functionally, involved in oxygen transport from the lung to the various peripheral tissues. This chain is Hemoglobin subunit beta (HBB), found in Anser indicus (Bar-headed goose).